The primary structure comprises 351 residues: Ferrochelatase (351 aa).

The Fe cation site is built by H221 and E302.

It belongs to the ferrochelatase family.

The protein localises to the cytoplasm. It carries out the reaction heme b + 2 H(+) = protoporphyrin IX + Fe(2+). It participates in porphyrin-containing compound metabolism; protoheme biosynthesis; protoheme from protoporphyrin-IX: step 1/1. Catalyzes the ferrous insertion into protoporphyrin IX. In Bradyrhizobium sp. (strain BTAi1 / ATCC BAA-1182), this protein is Ferrochelatase.